The chain runs to 213 residues: Protein RCR1 (213 aa).

Over 1-39 the chain is Lumenal; sequence MGLISYENEAINEVKKADNHHVSKFVTSYYGPSSSSWQS. The chain crosses the membrane as a helical span at residues 40–62; it reads GIWILFVLFVAAVILIILFTFVA. Topologically, residues 63–213 are cytoplasmic; it reads NRRRRRMGRA…PERAKVNARS (151 aa). The PY motif signature appears at 104-107; the sequence is VPEY. The segment at 190–213 is disordered; sequence ERLPGGTTTQEINPPERAKVNARS. The segment covering 203–213 has biased composition (basic and acidic residues); that stretch reads PPERAKVNARS.

Interacts with PMT4 and WW domain of RSP5.

It is found in the endoplasmic reticulum membrane. Regulates chitin deposition in the cell wall. This Saccharomyces cerevisiae (strain ATCC 204508 / S288c) (Baker's yeast) protein is Protein RCR1 (RCR1).